A 90-amino-acid polypeptide reads, in one-letter code: Acylphosphatase (90 aa).

An Acylphosphatase-like domain is found at 4–90; the sequence is TRRVRFYGRV…TEFQDFQIKR (87 aa). Catalysis depends on residues Arg-19 and Asn-37.

The protein belongs to the acylphosphatase family.

It carries out the reaction an acyl phosphate + H2O = a carboxylate + phosphate + H(+). The protein is Acylphosphatase (acyP) of Thermoplasma volcanium (strain ATCC 51530 / DSM 4299 / JCM 9571 / NBRC 15438 / GSS1).